A 102-amino-acid chain; its full sequence is Small ribosomal subunit protein uS10 (102 aa).

It belongs to the universal ribosomal protein uS10 family. In terms of assembly, part of the 30S ribosomal subunit.

Involved in the binding of tRNA to the ribosomes. This chain is Small ribosomal subunit protein uS10, found in Lactococcus lactis subsp. lactis (strain IL1403) (Streptococcus lactis).